The primary structure comprises 720 residues: Catalase-peroxidase (720 aa).

Positions 1–21 are cleaved as a signal peptide; it reads MSENKCPVMHGSATTTENSMA. Residues 94–222 constitute a cross-link (tryptophyl-tyrosyl-methioninium (Trp-Tyr) (with M-248)); that stretch reads WHAAGTYRIA…LAAVMMGLIY (129 aa). The active-site Proton acceptor is the His95. Residues 222–248 constitute a cross-link (tryptophyl-tyrosyl-methioninium (Tyr-Met) (with W-94)); sequence YVNPEGVDGKPDPLKTAQDIRETFARM. His263 serves as a coordination point for heme b.

This sequence belongs to the peroxidase family. Peroxidase/catalase subfamily. Homodimer or homotetramer. Heme b serves as cofactor. Post-translationally, formation of the three residue Trp-Tyr-Met cross-link is important for the catalase, but not the peroxidase activity of the enzyme.

The enzyme catalyses H2O2 + AH2 = A + 2 H2O. The catalysed reaction is 2 H2O2 = O2 + 2 H2O. In terms of biological role, bifunctional enzyme with both catalase and broad-spectrum peroxidase activity. In Shewanella denitrificans (strain OS217 / ATCC BAA-1090 / DSM 15013), this protein is Catalase-peroxidase.